The following is a 371-amino-acid chain: Glycerol-3-phosphate dehydrogenase [NAD(+)] 2 (371 aa).

NAD(+) contacts are provided by residues 18 to 23, Phe-50, and Phe-106; that span reads GSGNWG. Substrate is bound at residue Lys-129. Ala-162 is a binding site for NAD(+). The active-site Proton acceptor is the Lys-222. Residues Arg-294 and Gln-323 each coordinate NAD(+). 294–295 contributes to the substrate binding site; the sequence is RN.

This sequence belongs to the NAD-dependent glycerol-3-phosphate dehydrogenase family. In terms of assembly, interacts with human CFH/complement factor H; the interaction is direct and enables the pathogen to evade the host innate immune system. Interacts with human CFHR1/complement factor H-related protein 1; the interaction is direct. Interacts with human PLG/plasminogen; the interaction is direct and provides active plasmin on the surface of fungal cells.

The protein localises to the secreted. Its subcellular location is the cell wall. It is found in the cytoplasm. It localises to the peroxisome. It carries out the reaction sn-glycerol 3-phosphate + NAD(+) = dihydroxyacetone phosphate + NADH + H(+). May catalyze the production and accumulation of glycerol during hyperosmotic stress conditions. Glycerol acts as a osmoregulator that prevents loss of water and turgor of the cells. Mediates evasion of the host innate immune system by binding inhibitory components of the host alternative complement system, in a manner dependent on estrogen-induced inhibition of EBP1. The protein is Glycerol-3-phosphate dehydrogenase [NAD(+)] 2 of Candida albicans (strain SC5314 / ATCC MYA-2876) (Yeast).